Reading from the N-terminus, the 239-residue chain is Uridylate kinase (239 aa).

13–16 (KLSG) is an ATP binding site. Glycine 55 provides a ligand contact to UMP. Glycine 56 and arginine 60 together coordinate ATP. UMP-binding positions include aspartate 75 and 136–143 (TGNPFFTT). Threonine 163, tyrosine 169, and aspartate 172 together coordinate ATP.

It belongs to the UMP kinase family. In terms of assembly, homohexamer.

Its subcellular location is the cytoplasm. It carries out the reaction UMP + ATP = UDP + ADP. It functions in the pathway pyrimidine metabolism; CTP biosynthesis via de novo pathway; UDP from UMP (UMPK route): step 1/1. Its activity is regulated as follows. Inhibited by UTP. In terms of biological role, catalyzes the reversible phosphorylation of UMP to UDP. The chain is Uridylate kinase from Chromobacterium violaceum (strain ATCC 12472 / DSM 30191 / JCM 1249 / CCUG 213 / NBRC 12614 / NCIMB 9131 / NCTC 9757 / MK).